A 177-amino-acid chain; its full sequence is Large ribosomal subunit protein uL6 (177 aa).

Belongs to the universal ribosomal protein uL6 family. Part of the 50S ribosomal subunit.

This protein binds to the 23S rRNA, and is important in its secondary structure. It is located near the subunit interface in the base of the L7/L12 stalk, and near the tRNA binding site of the peptidyltransferase center. This Alkalilimnicola ehrlichii (strain ATCC BAA-1101 / DSM 17681 / MLHE-1) protein is Large ribosomal subunit protein uL6.